The sequence spans 314 residues: Porphobilinogen deaminase (314 aa).

An S-(dipyrrolylmethanemethyl)cysteine modification is found at Cys-234.

The protein belongs to the HMBS family. Monomer. Dipyrromethane serves as cofactor.

It catalyses the reaction 4 porphobilinogen + H2O = hydroxymethylbilane + 4 NH4(+). It functions in the pathway porphyrin-containing compound metabolism; protoporphyrin-IX biosynthesis; coproporphyrinogen-III from 5-aminolevulinate: step 2/4. Functionally, tetrapolymerization of the monopyrrole PBG into the hydroxymethylbilane pre-uroporphyrinogen in several discrete steps. In Mycobacterium ulcerans (strain Agy99), this protein is Porphobilinogen deaminase.